The chain runs to 386 residues: uncharacterized protein (386 aa).

A run of 9 helical transmembrane segments spans residues Asn48 to Tyr68, Pro78 to Ile98, Leu136 to Ile156, Tyr171 to Ile191, Phe213 to Leu233, Val253 to Leu273, Phe285 to Val305, Trp316 to Leu336, and Phe344 to Ala364.

The protein belongs to the CDP-alcohol phosphatidyltransferase class-I family.

It localises to the membrane. This is an uncharacterized protein from Schizosaccharomyces pombe (strain 972 / ATCC 24843) (Fission yeast).